The following is a 209-amino-acid chain: Phosphoheptose isomerase (209 aa).

Residues 50 to 209 form the SIS domain; that stretch reads IAETFRNGGK…ELVESMMGYA (160 aa). 65–67 lines the substrate pocket; that stretch reads NGG. Residues His74 and Glu78 each contribute to the Zn(2+) site. Residues Glu78, 109–110, 135–137, Ser140, and Gln188 contribute to the substrate site; these read ND and STS. Zn(2+) contacts are provided by Gln188 and His196.

It belongs to the SIS family. GmhA subfamily. Zn(2+) serves as cofactor.

It is found in the cytoplasm. The enzyme catalyses 2 D-sedoheptulose 7-phosphate = D-glycero-alpha-D-manno-heptose 7-phosphate + D-glycero-beta-D-manno-heptose 7-phosphate. It functions in the pathway carbohydrate biosynthesis; D-glycero-D-manno-heptose 7-phosphate biosynthesis; D-glycero-alpha-D-manno-heptose 7-phosphate and D-glycero-beta-D-manno-heptose 7-phosphate from sedoheptulose 7-phosphate: step 1/1. In terms of biological role, catalyzes the isomerization of sedoheptulose 7-phosphate in D-glycero-D-manno-heptose 7-phosphate. The polypeptide is Phosphoheptose isomerase (Chlorobaculum parvum (strain DSM 263 / NCIMB 8327) (Chlorobium vibrioforme subsp. thiosulfatophilum)).